The sequence spans 131 residues: Small ribosomal subunit protein uS8 (131 aa).

This sequence belongs to the universal ribosomal protein uS8 family. Part of the 30S ribosomal subunit. Contacts proteins S5 and S12.

Functionally, one of the primary rRNA binding proteins, it binds directly to 16S rRNA central domain where it helps coordinate assembly of the platform of the 30S subunit. The chain is Small ribosomal subunit protein uS8 from Methylococcus capsulatus (strain ATCC 33009 / NCIMB 11132 / Bath).